The sequence spans 323 residues: Ribosomal protein L11 methyltransferase (323 aa).

The S-adenosyl-L-methionine site is built by threonine 160, glycine 184, aspartate 206, and asparagine 257.

Belongs to the methyltransferase superfamily. PrmA family.

Its subcellular location is the cytoplasm. The catalysed reaction is L-lysyl-[protein] + 3 S-adenosyl-L-methionine = N(6),N(6),N(6)-trimethyl-L-lysyl-[protein] + 3 S-adenosyl-L-homocysteine + 3 H(+). Methylates ribosomal protein L11. This chain is Ribosomal protein L11 methyltransferase, found in Agathobacter rectalis (strain ATCC 33656 / DSM 3377 / JCM 17463 / KCTC 5835 / VPI 0990) (Eubacterium rectale).